Consider the following 475-residue polypeptide: E3 ubiquitin-protein ligase TRIM21 (475 aa).

The segment at 16 to 55 (CPICLDPFVEPVSIECGHSFCQECISQVGKGGGSVCPVCR) adopts an RING-type zinc-finger fold. 4 residues coordinate Zn(2+): Cys92, His95, Cys114, and His120. The B box-type zinc-finger motif lies at 92 to 123 (CAVHGERLHLFCEKDGKALCWVCAQSRKHRDH). Residues 128–238 (LEEAAQEYQE…ISELDRRCHS (111 aa)) adopt a coiled-coil conformation. Ser266 is modified (phosphoserine). The 198-residue stretch at 268-465 (ELRSVCHVPG…NTAPLTLCPL (198 aa)) folds into the B30.2/SPRY domain.

Belongs to the TRIM/RBCC family. Homotrimer. Interacts (via C-terminus) with IRF8 (via C-terminus). Component of a SCF(SKP2)-like complex containing CUL1, SKP1, TRIM21 and SKP2. Interacts with CALR, CUL1, FBXW11, HSPA5, IKBKB, IRF3, SKP1 and VCP. Interacts with SKP2; the interaction with SKP2 does not depend on an intact F-box domain. Interacts (via N-terminus and C-terminus) with DCP2 (via N-terminus and C-terminus). Interacts with ULK1, BECN1 and with ATG8 family members, including GABARAP, GABARAPL1, GABARAPL2 and MAP1LC3C/LC3C. Interacts with TRIM21 and SQSTM1/sequestosome 1. Interacts with IRF3. Interacts (via the SPRY domain) with NMI (via coiled-coil domain); the interaction promotes 'Lys-63'-linked ubiquitination of NMI. Interacts with IFI35 and NMI; the interaction facilitates NMI-IFI35 complex formation. In terms of assembly, (Microbial infection) Interacts (via B30.2/SPRY domain) with severe fever with thrombocytopenia syndrome virus (SFTSV) NSs; this interaction activates NFE2L2-mediated transcriptional activation of antioxidant genes. Post-translationally, autoubiquitinated; does not lead to its proteasomal degradation. Deubiquitinated by USP4; leading to its stabilization. Isoform 1 and isoform 2 are expressed in fetal and adult heart and fetal lung.

The protein resides in the cytoplasm. The protein localises to the cytoplasmic vesicle. It is found in the autophagosome. It localises to the nucleus. Its subcellular location is the P-body. The protein resides in the stress granule. It carries out the reaction S-ubiquitinyl-[E2 ubiquitin-conjugating enzyme]-L-cysteine + [acceptor protein]-L-lysine = [E2 ubiquitin-conjugating enzyme]-L-cysteine + N(6)-ubiquitinyl-[acceptor protein]-L-lysine.. It participates in protein modification; protein ubiquitination. Functionally, E3 ubiquitin-protein ligase whose activity is dependent on E2 enzymes, UBE2D1, UBE2D2, UBE2E1 and UBE2E2. Forms a ubiquitin ligase complex in cooperation with the E2 UBE2D2 that is used not only for the ubiquitination of USP4 and IKBKB but also for its self-ubiquitination. Component of cullin-RING-based SCF (SKP1-CUL1-F-box protein) E3 ubiquitin-protein ligase complexes such as SCF(SKP2)-like complexes. A TRIM21-containing SCF(SKP2)-like complex is shown to mediate ubiquitination of CDKN1B ('Thr-187' phosphorylated-form), thereby promoting its degradation by the proteasome. Monoubiquitinates IKBKB that will negatively regulates Tax-induced NF-kappa-B signaling. Negatively regulates IFN-beta production post-pathogen recognition by catalyzing polyubiquitin-mediated degradation of IRF3. Mediates the ubiquitin-mediated proteasomal degradation of IgG1 heavy chain, which is linked to the VCP-mediated ER-associated degradation (ERAD) pathway. Promotes IRF8 ubiquitination, which enhanced the ability of IRF8 to stimulate cytokine genes transcription in macrophages. Plays a role in the regulation of the cell cycle progression. Enhances the decapping activity of DCP2. Exists as a ribonucleoprotein particle present in all mammalian cells studied and composed of a single polypeptide and one of four small RNA molecules. At least two isoforms are present in nucleated and red blood cells, and tissue specific differences in RO/SSA proteins have been identified. The common feature of these proteins is their ability to bind HY RNAs.2. Involved in the regulation of innate immunity and the inflammatory response in response to IFNG/IFN-gamma. Organizes autophagic machinery by serving as a platform for the assembly of ULK1, Beclin 1/BECN1 and ATG8 family members and recognizes specific autophagy targets, thus coordinating target recognition with assembly of the autophagic apparatus and initiation of autophagy. Also regulates autophagy through FIP200/RB1CC1 ubiquitination and subsequent decreased protein stability. Represses the innate antiviral response by facilitating the formation of the NMI-IFI35 complex through 'Lys-63'-linked ubiquitination of NMI. During viral infection, promotes cell pyroptosis by mediating 'Lys-6'-linked ubiquitination of ISG12a/IFI27, facilitating its translocation into the mitochondria and subsequent CASP3 activation. When up-regulated through the IFN/JAK/STAT signaling pathway, promotes 'Lys-27'-linked ubiquitination of MAVS, leading to the recruitment of TBK1 and up-regulation of innate immunity. Mediates 'Lys-63'-linked polyubiquitination of G3BP1 in response to heat shock, leading to stress granule disassembly. This chain is E3 ubiquitin-protein ligase TRIM21, found in Homo sapiens (Human).